Reading from the N-terminus, the 134-residue chain is Small ribosomal subunit protein uS8c (134 aa).

The protein belongs to the universal ribosomal protein uS8 family. In terms of assembly, part of the 30S ribosomal subunit.

Its subcellular location is the plastid. Its function is as follows. One of the primary rRNA binding proteins, it binds directly to 16S rRNA central domain where it helps coordinate assembly of the platform of the 30S subunit. This chain is Small ribosomal subunit protein uS8c (rps8), found in Cuscuta gronovii (Common dodder).